The following is a 382-amino-acid chain: Succinate--CoA ligase [ADP-forming] subunit beta (382 aa).

The 229-residue stretch at 9–237 (RDLLARYGIP…PSAEPEAERR (229 aa)) folds into the ATP-grasp domain. ATP is bound by residues lysine 45, 52–54 (GRG), isoleucine 94, and glutamate 99. Positions 192 and 206 each coordinate Mg(2+). Substrate contacts are provided by residues asparagine 257 and 314 to 316 (GIT).

This sequence belongs to the succinate/malate CoA ligase beta subunit family. As to quaternary structure, heterotetramer of two alpha and two beta subunits. Mg(2+) serves as cofactor.

It carries out the reaction succinate + ATP + CoA = succinyl-CoA + ADP + phosphate. The catalysed reaction is GTP + succinate + CoA = succinyl-CoA + GDP + phosphate. It functions in the pathway carbohydrate metabolism; tricarboxylic acid cycle; succinate from succinyl-CoA (ligase route): step 1/1. Succinyl-CoA synthetase functions in the citric acid cycle (TCA), coupling the hydrolysis of succinyl-CoA to the synthesis of either ATP or GTP and thus represents the only step of substrate-level phosphorylation in the TCA. The beta subunit provides nucleotide specificity of the enzyme and binds the substrate succinate, while the binding sites for coenzyme A and phosphate are found in the alpha subunit. This is Succinate--CoA ligase [ADP-forming] subunit beta from Chloroflexus aggregans (strain MD-66 / DSM 9485).